Consider the following 146-residue polypeptide: Snaclec rhodocytin subunit beta (146 aa).

Residues 1–23 (MGRFIFVSFGLLVVFLSLSGTGA) form the signal peptide. 3 cysteine pairs are disulfide-bonded: Cys25/Cys36, Cys53/Cys142, and Cys119/Cys134. The C-type lectin domain occupies 32–143 (YEGHCYKPFN…CSSTCSFVCK (112 aa)).

It belongs to the snaclec family. In terms of assembly, dimer (non-covalently linked) of heterodimers of subunits alpha and beta (disulfide-linked). As to expression, expressed by the venom gland.

It localises to the secreted. Functionally, elicits platelet aggregation by the binding to the C-type lectin domain family 1 member B (CLEC1B/CLEC2). Binding leads to tyrosine phosphorylation in the cytoplasmic tail of CLEC1B, which promotes the binding of spleen tyrosine kinase (Syk), subsequent activation of PLCgamma2, and platelet activation and aggregation. Binding to GPIbalpha (GP1BA) and alpha2/beta-1 (ITGA2/ITGB1) may also induce aggregation, but this is controversial. This is Snaclec rhodocytin subunit beta from Calloselasma rhodostoma (Malayan pit viper).